A 268-amino-acid polypeptide reads, in one-letter code: Homeobox protein Hox-D12 (268 aa).

Positions 102 to 124 are disordered; sequence TPDAPTASEERSRTRPPFAPESS. A DNA-binding region (homeobox) is located at residues 200–259; the sequence is ARKKRKPYTKQQIAELENEFLVNEFINRQKRKELSNRLNLSDQQVKIWFQNRRMKKKRVV.

It belongs to the Abd-B homeobox family.

The protein localises to the nucleus. Sequence-specific transcription factor which is part of a developmental regulatory system that provides cells with specific positional identities on the anterior-posterior axis. The chain is Homeobox protein Hox-D12 (Hoxd12) from Mus musculus (Mouse).